Consider the following 329-residue polypeptide: Ribonucleoside-diphosphate reductase small chain (329 aa).

Positions 75, 106, and 109 each coordinate Fe cation. The active site involves Tyr113. The Fe cation site is built by Glu168, Glu202, and His205.

Belongs to the ribonucleoside diphosphate reductase small chain family. As to quaternary structure, heterodimer of a large and a small chain. The cofactor is Fe cation.

Its subcellular location is the cytoplasm. The enzyme catalyses a 2'-deoxyribonucleoside 5'-diphosphate + [thioredoxin]-disulfide + H2O = a ribonucleoside 5'-diphosphate + [thioredoxin]-dithiol. Functionally, provides the precursors necessary for DNA synthesis. Catalyzes the biosynthesis of deoxyribonucleotides from the corresponding ribonucleotides. In Nicotiana tabacum (Common tobacco), this protein is Ribonucleoside-diphosphate reductase small chain.